The chain runs to 214 residues: MHDISSLTTRTKALPPLRVGVGGPVGSGKTTLLEMVCKAMYPQFDLIAITNDIYTKEDQRLLTLSGALPPERILGVETGGCPHTAIREDASINLIAIDQMLEQFPDADIVFVESGGDNLAATFSPELSDLTLYIIDVASGEKIPRKGGPGITKSDLFIINKTDLAPYVGADLAVMEADTRRMRGDKPFVMCNLKTGDGLDQVIAFLKTEGLFRG.

Residue 23–30 (GPVGSGKT) coordinates GTP.

The protein belongs to the SIMIBI class G3E GTPase family. UreG subfamily. Homodimer. UreD, UreF and UreG form a complex that acts as a GTP-hydrolysis-dependent molecular chaperone, activating the urease apoprotein by helping to assemble the nickel containing metallocenter of UreC. The UreE protein probably delivers the nickel.

The protein resides in the cytoplasm. Its function is as follows. Facilitates the functional incorporation of the urease nickel metallocenter. This process requires GTP hydrolysis, probably effectuated by UreG. This is Urease accessory protein UreG from Bordetella pertussis (strain Tohama I / ATCC BAA-589 / NCTC 13251).